Reading from the N-terminus, the 65-residue chain is Small ribosomal subunit protein eS27 (65 aa).

The Zn(2+) site is built by C20, C23, C39, and C42. The C4-type zinc finger occupies 20–42 (CIDCGNEQIVFSHPATKVRCLVC).

This sequence belongs to the eukaryotic ribosomal protein eS27 family. Part of the 30S ribosomal subunit. The cofactor is Zn(2+).

This is Small ribosomal subunit protein eS27 from Thermococcus gammatolerans (strain DSM 15229 / JCM 11827 / EJ3).